A 241-amino-acid polypeptide reads, in one-letter code: uncharacterized protein (241 aa).

The next 6 membrane-spanning stretches (helical) occupy residues 1 to 21 (MMMA…GILL), 43 to 63 (FPII…LKNL), 75 to 95 (LPIY…FYAI), 108 to 128 (IYVL…VLML), 160 to 180 (VLTS…HGLL), and 200 to 220 (ILVI…IASG).

This sequence to M.jannaschii MJ0871, MJ0880 and MJ1556.

It localises to the cell membrane. This is an uncharacterized protein from Methanocaldococcus jannaschii (strain ATCC 43067 / DSM 2661 / JAL-1 / JCM 10045 / NBRC 100440) (Methanococcus jannaschii).